A 126-amino-acid chain; its full sequence is UPF0102 protein MXAN_3551 (126 aa).

Belongs to the UPF0102 family.

This is UPF0102 protein MXAN_3551 from Myxococcus xanthus (strain DK1622).